Reading from the N-terminus, the 458-residue chain is UDP-N-acetylmuramoylalanine--D-glutamate ligase (458 aa).

118–124 contributes to the ATP binding site; the sequence is GTNGKTT.

This sequence belongs to the MurCDEF family.

It is found in the cytoplasm. The enzyme catalyses UDP-N-acetyl-alpha-D-muramoyl-L-alanine + D-glutamate + ATP = UDP-N-acetyl-alpha-D-muramoyl-L-alanyl-D-glutamate + ADP + phosphate + H(+). It functions in the pathway cell wall biogenesis; peptidoglycan biosynthesis. Its function is as follows. Cell wall formation. Catalyzes the addition of glutamate to the nucleotide precursor UDP-N-acetylmuramoyl-L-alanine (UMA). In Ligilactobacillus salivarius (strain UCC118) (Lactobacillus salivarius), this protein is UDP-N-acetylmuramoylalanine--D-glutamate ligase.